The primary structure comprises 450 residues: Exodeoxyribonuclease 7 large subunit (450 aa).

Belongs to the XseA family. Heterooligomer composed of large and small subunits.

It localises to the cytoplasm. It carries out the reaction Exonucleolytic cleavage in either 5'- to 3'- or 3'- to 5'-direction to yield nucleoside 5'-phosphates.. Bidirectionally degrades single-stranded DNA into large acid-insoluble oligonucleotides, which are then degraded further into small acid-soluble oligonucleotides. This chain is Exodeoxyribonuclease 7 large subunit, found in Listeria innocua serovar 6a (strain ATCC BAA-680 / CLIP 11262).